A 55-amino-acid polypeptide reads, in one-letter code: COP9 signalosome complex subunit 3 (55 aa).

Residues 1 to 52 (KSIQGLSASPGDLSALHGKEAEMHVLQMIQDGQIHALINQKDGMVRFLEDPE) enclose the PCI domain.

The protein belongs to the CSN3 family. Component of the CSN complex, probably composed of CSN1, CSN2, CSN3, CSN4, CSN5 (CSN5A or CSN5B), CSN6 (CSN6A or CSN6B), CSN7 and CSN8.

Its subcellular location is the cytoplasm. The protein localises to the nucleus. Functionally, component of the COP9 signalosome complex (CSN), a complex involved in various cellular and developmental processes such as photomorphogenesis and auxin and jasmonate responses. The CSN complex is an essential regulator of the ubiquitin (Ubl) conjugation pathway by mediating the deneddylation of the cullin subunits of SCF-type E3 ligase complexes, leading to decrease the Ubl ligase activity of SCF. It is involved in repression of photomorphogenesis in darkness by regulating the activity of COP1-containing Ubl ligase complexes. In Brassica oleracea (Wild cabbage), this protein is COP9 signalosome complex subunit 3 (CSN3).